The following is a 367-amino-acid chain: Aspartate-semialdehyde dehydrogenase (367 aa).

Residues 10-13, 37-38, and Gln-73 contribute to the NADP(+) site; these read RGMV and TS. Arg-102 serves as a coordination point for phosphate. Cys-135 (acyl-thioester intermediate) is an active-site residue. Residue Cys-135 is modified to S-cysteinyl cysteine; in inhibited form. Residue Gln-162 coordinates substrate. Residues 165–166 and Pro-193 contribute to the NADP(+) site; that span reads SG. Substrate is bound at residue Glu-241. Lys-244 is a binding site for phosphate. Substrate is bound at residue Arg-267. Residue His-274 is the Proton acceptor of the active site. Gln-350 provides a ligand contact to NADP(+).

Belongs to the aspartate-semialdehyde dehydrogenase family. Homodimer.

The enzyme catalyses L-aspartate 4-semialdehyde + phosphate + NADP(+) = 4-phospho-L-aspartate + NADPH + H(+). It participates in amino-acid biosynthesis; L-lysine biosynthesis via DAP pathway; (S)-tetrahydrodipicolinate from L-aspartate: step 2/4. Its pathway is amino-acid biosynthesis; L-methionine biosynthesis via de novo pathway; L-homoserine from L-aspartate: step 2/3. It functions in the pathway amino-acid biosynthesis; L-threonine biosynthesis; L-threonine from L-aspartate: step 2/5. Its function is as follows. Catalyzes the NADPH-dependent formation of L-aspartate-semialdehyde (L-ASA) by the reductive dephosphorylation of L-aspartyl-4-phosphate. The protein is Aspartate-semialdehyde dehydrogenase of Escherichia coli O6:H1 (strain CFT073 / ATCC 700928 / UPEC).